The sequence spans 378 residues: UDP-4-amino-4-deoxy-L-arabinose--oxoglutarate aminotransferase (378 aa).

An N6-(pyridoxal phosphate)lysine modification is found at Lys-182.

The protein belongs to the DegT/DnrJ/EryC1 family. ArnB subfamily. As to quaternary structure, homodimer. Requires pyridoxal 5'-phosphate as cofactor.

The enzyme catalyses UDP-4-amino-4-deoxy-beta-L-arabinose + 2-oxoglutarate = UDP-beta-L-threo-pentopyranos-4-ulose + L-glutamate. The protein operates within nucleotide-sugar biosynthesis; UDP-4-deoxy-4-formamido-beta-L-arabinose biosynthesis; UDP-4-deoxy-4-formamido-beta-L-arabinose from UDP-alpha-D-glucuronate: step 2/3. Its pathway is bacterial outer membrane biogenesis; lipopolysaccharide biosynthesis. Functionally, catalyzes the conversion of UDP-4-keto-arabinose (UDP-Ara4O) to UDP-4-amino-4-deoxy-L-arabinose (UDP-L-Ara4N). The modified arabinose is attached to lipid A and is required for resistance to polymyxin and cationic antimicrobial peptides. The protein is UDP-4-amino-4-deoxy-L-arabinose--oxoglutarate aminotransferase of Aeromonas hydrophila subsp. hydrophila (strain ATCC 7966 / DSM 30187 / BCRC 13018 / CCUG 14551 / JCM 1027 / KCTC 2358 / NCIMB 9240 / NCTC 8049).